We begin with the raw amino-acid sequence, 66 residues long: UPF0434 protein Jann_0424 (66 aa).

This sequence belongs to the UPF0434 family.

This is UPF0434 protein Jann_0424 from Jannaschia sp. (strain CCS1).